A 641-amino-acid polypeptide reads, in one-letter code: Soluble starch synthase 1, chloroplastic/amyloplastic (641 aa).

The transit peptide at 1-113 (MATAAGMGIG…DSIDKTIFVA (113 aa)) directs the protein to the chloroplast. A disordered region spans residues 62-96 (TFLVPTSTPPAPTQSPAPAPTPPPLPDSGVGEIEP). Over residues 68–87 (STPPAPTQSPAPAPTPPPLP) the composition is skewed to pro residues. ADP-alpha-D-glucose is bound at residue lysine 147.

The protein belongs to the glycosyltransferase 1 family. Bacterial/plant glycogen synthase subfamily. Leaves and immature seeds.

The protein resides in the plastid. Its subcellular location is the chloroplast. It localises to the amyloplast. It catalyses the reaction [(1-&gt;4)-alpha-D-glucosyl](n) + ADP-alpha-D-glucose = [(1-&gt;4)-alpha-D-glucosyl](n+1) + ADP + H(+). It participates in glycan biosynthesis; starch biosynthesis. Its function is as follows. Involved in starch synthesis in endosperm amyloplasts. Plays a role in the elongation of amylopectin chains. Synthesizes preferentially amylopectin chains with a degree of polymerization (DP) of 7 to 11 by elongating chains with a DP of 4 to 7. Generates distincly chains with a DP of 8 to 12 chains from short chains with a DP of 6 to 7. In Oryza sativa subsp. japonica (Rice), this protein is Soluble starch synthase 1, chloroplastic/amyloplastic.